The primary structure comprises 190 residues: Tegument antigen (190 aa).

EF-hand domains follow at residues 8–43 (SQME…YRLD) and 51–77 (IARF…KVSE). Ca(2+)-binding residues include Asp55, Asp57, Asp59, Lys61, and Glu66.

As to expression, adult and schistosomula tegument.

In Schistosoma mansoni (Blood fluke), this protein is Tegument antigen.